The following is a 353-amino-acid chain: D-alanine--D-alanine ligase (353 aa).

One can recognise an ATP-grasp domain in the interval 141–349 (KAAFAAAGLP…LPDLVAQLVH (209 aa)). 176-231 (EAELGYPCFVKPANMGSSVGISKARHRDQLLAGLKEAARHDTRLVVEHGVSARELE) contributes to the ATP binding site. Residues aspartate 302, glutamate 316, and asparagine 318 each contribute to the Mg(2+) site.

Belongs to the D-alanine--D-alanine ligase family. Mg(2+) is required as a cofactor. The cofactor is Mn(2+).

It is found in the cytoplasm. The enzyme catalyses 2 D-alanine + ATP = D-alanyl-D-alanine + ADP + phosphate + H(+). Its pathway is cell wall biogenesis; peptidoglycan biosynthesis. In terms of biological role, cell wall formation. The chain is D-alanine--D-alanine ligase from Synechococcus sp. (strain CC9311).